Consider the following 76-residue polypeptide: ATP synthase subunit 9, mitochondrial (76 aa).

Residue Met1 is modified to N-formylmethionine. 2 helical membrane passes run 14–34 (IATI…AALI) and 52–72 (ILGF…SFLL).

F-type ATP synthases have 2 components, the catalytic core F(1) and the membrane-embedded component F(0), linked together by a central stalk and a peripheral stalk. The central stalk, also called rotor shaft, is often seen as part of F(1). The peripheral stalk is seen as part of F(0). F(0) contains the membrane channel next to the rotor. F-type ATP synthases form dimers but each monomer functions independently in ATP generation. The dimer consists of 18 different polypeptides: ATP1 (subunit alpha, part of F(1), 3 molecules per monomer), ATP2 (subunit beta, part of F(1), 3 molecules per monomer), ATP3 (subunit gamma, part of the central stalk), ATP4 (subunit b, part of the peripheral stalk), ATP5/OSCP (subunit 5/OSCP, part of the peripheral stalk), ATP6 (subunit a, part of the peripheral stalk), ATP7 (subunit d, part of the peripheral stalk), ATP8 (subunit 8, part of the peripheral stalk), OLI1 (subunit c, part of the rotor, 10 molecules per monomer), ATP14 (subunit h, part of the peripheral stalk), ATP15 (subunit epsilon, part of the central stalk), ATP16 (subunit delta, part of the central stalk), ATP17 (subunit f, part of the peripheral stalk), ATP18 (subunit i/j, part of the peripheral stalk). Dimer-specific subunits are ATP19 (subunit k, at interface between monomers), ATP20 (subunit g, at interface between monomers), TIM11 (subunit e, at interface between monomers). Also contains subunit L.

It localises to the mitochondrion inner membrane. In terms of biological role, mitochondrial membrane ATP synthase (F(1)F(0) ATP synthase or Complex V) produces ATP from ADP in the presence of a proton gradient across the membrane which is generated by electron transport complexes of the respiratory chain. F-type ATP synthases consist of two structural domains, F(1) - containing the extramembraneous catalytic core, and F(0) - containing the membrane proton channel, linked together by a central stalk and a peripheral stalk. During catalysis, ATP synthesis in the catalytic domain of F(1) is coupled via a rotary mechanism of the central stalk subunits to proton translocation. Part of the complex F(0) domain. A homomeric c-ring of 10 OLI1/ATP9 subunits is part of the complex rotary element. This is ATP synthase subunit 9, mitochondrial from Pichia angusta (Yeast).